The chain runs to 561 residues: 2-succinyl-5-enolpyruvyl-6-hydroxy-3-cyclohexene-1-carboxylate synthase (561 aa).

It belongs to the TPP enzyme family. MenD subfamily. As to quaternary structure, homodimer. The cofactor is Mg(2+). Mn(2+) serves as cofactor. Thiamine diphosphate is required as a cofactor.

It catalyses the reaction isochorismate + 2-oxoglutarate + H(+) = 5-enolpyruvoyl-6-hydroxy-2-succinyl-cyclohex-3-ene-1-carboxylate + CO2. The protein operates within quinol/quinone metabolism; 1,4-dihydroxy-2-naphthoate biosynthesis; 1,4-dihydroxy-2-naphthoate from chorismate: step 2/7. Its pathway is cofactor biosynthesis; phylloquinone biosynthesis. Its function is as follows. Catalyzes the thiamine diphosphate-dependent decarboxylation of 2-oxoglutarate and the subsequent addition of the resulting succinic semialdehyde-thiamine pyrophosphate anion to isochorismate to yield 2-succinyl-5-enolpyruvyl-6-hydroxy-3-cyclohexene-1-carboxylate (SEPHCHC). This is 2-succinyl-5-enolpyruvyl-6-hydroxy-3-cyclohexene-1-carboxylate synthase from Synechococcus sp. (strain CC9605).